The primary structure comprises 497 residues: Lysine--tRNA ligase (497 aa).

Residues glutamate 409 and glutamate 416 each contribute to the Mg(2+) site.

The protein belongs to the class-II aminoacyl-tRNA synthetase family. As to quaternary structure, homodimer. It depends on Mg(2+) as a cofactor.

The protein localises to the cytoplasm. It catalyses the reaction tRNA(Lys) + L-lysine + ATP = L-lysyl-tRNA(Lys) + AMP + diphosphate. This Streptococcus pyogenes serotype M6 (strain ATCC BAA-946 / MGAS10394) protein is Lysine--tRNA ligase.